Reading from the N-terminus, the 364-residue chain is N-alpha-acetyltransferase 30 (364 aa).

Over residues 1–18 (MAEVPPGPSSLLPPPAPA) the composition is skewed to pro residues. Disordered stretches follow at residues 1–21 (MAEV…AAPA), 39–65 (SEDE…TSAK), and 110–164 (EAAA…SDPA). Phosphoserine occurs at positions 39 and 54. The span at 39 to 48 (SEDEEDDEEH) shows a compositional bias: acidic residues. Residues 126–135 (AEGHPGERPP) are compositionally biased toward basic and acidic residues. Residues 152–164 (AAAAAAGAASDPA) are compositionally biased toward low complexity. 3 positions are modified to phosphoserine: S192, S198, and S201. One can recognise an N-acetyltransferase domain in the interval 216-364 (RYVRYESELQ…DALRLKLWLR (149 aa)). K235 carries the N6-acetyllysine modification.

This sequence belongs to the acetyltransferase family. MAK3 subfamily. Component of the N-terminal acetyltransferase C (NatC) complex, which is composed of NAA35, NAA38 and NAA30.

The protein localises to the cytoplasm. Its subcellular location is the nucleus. It catalyses the reaction N-terminal L-methionyl-L-leucyl-[protein] + acetyl-CoA = N-terminal N(alpha)-acetyl-L-methionyl-L-leucyl-[protein] + CoA + H(+). The enzyme catalyses N-terminal L-methionyl-L-isoleucyl-[protein] + acetyl-CoA = N-terminal N(alpha)-acetyl-L-methionyl-L-isoleucyl-[protein] + CoA + H(+). It carries out the reaction N-terminal L-methionyl-L-phenylalanyl-[protein] + acetyl-CoA = N-terminal N(alpha)-acetyl-L-methionyl-L-phenylalanyl-[protein] + CoA + H(+). The catalysed reaction is N-terminal L-methionyl-L-tryptophyl-[protein] + acetyl-CoA = N-terminal N(alpha)-acetyl-L-methionyl-L-tryptophyl-[protein] + CoA + H(+). It catalyses the reaction N-terminal L-methionyl-L-tyrosyl-[protein] + acetyl-CoA = N-terminal N(alpha)-acetyl-L-methionyl-L-tyrosyl-[protein] + CoA + H(+). In terms of biological role, catalytic subunit of the N-terminal acetyltransferase C (NatC) complex. Catalyzes acetylation of the N-terminal methionine residues of peptides beginning with Met-Leu-Ala and Met-Leu-Gly. N-terminal acetylation protects proteins from ubiquitination and degradation by the N-end rule pathway. Necessary for the lysosomal localization and function of ARL8B sugeesting that ARL8B is a NatC substrate. This is N-alpha-acetyltransferase 30 (Naa30) from Mus musculus (Mouse).